Reading from the N-terminus, the 166-residue chain is Signal peptidase complex catalytic subunit SEC11 (166 aa).

Residues 1–9 are Cytoplasmic-facing; sequence MNIRQQLTQ. The chain crosses the membrane as a helical; Signal-anchor for type II membrane protein span at residues 10–30; the sequence is FLSLAYVFTSAFVIWKSLGII. At 31–166 the chain is on the lumenal side; the sequence is TNSHSPIVVV…MCISTLLTNE (136 aa). Active-site charge relay system residues include Ser44, His83, and Asp108. The C-terminal short (CTS) helix stretch occupies residues 152–163; the sequence is GMLGLMCISTLL.

The protein belongs to the peptidase S26B family. As to quaternary structure, component of the signal peptidase complex (SPC) composed of a catalytic subunit SEC11 and three accessory subunits SPC1, SPC2 and SPC3. The complex induces a local thinning of the ER membrane which is used to measure the length of the signal peptide (SP) h-region of protein substrates. This ensures the selectivity of the complex towards h-regions shorter than 18-20 amino acids. SPC associates with the translocon complex.

The protein localises to the endoplasmic reticulum membrane. It catalyses the reaction Cleavage of hydrophobic, N-terminal signal or leader sequences from secreted and periplasmic proteins.. Catalytic component of the signal peptidase complex (SPC) which catalyzes the cleavage of N-terminal signal sequences from nascent proteins as they are translocated into the lumen of the endoplasmic reticulum. Specifically cleaves N-terminal signal peptides that contain a hydrophobic alpha-helix (h-region) shorter than 18-20 amino acids. The sequence is that of Signal peptidase complex catalytic subunit SEC11 (SEC11) from Scheffersomyces stipitis (strain ATCC 58785 / CBS 6054 / NBRC 10063 / NRRL Y-11545) (Yeast).